The chain runs to 647 residues: TNFAIP3-interacting protein 1 (647 aa).

Residues 39–72 (MQGIKMLGELLEESQMEASRLRQKAEELVKDSEL) adopt a coiled-coil conformation. Over residues 61–71 (QKAEELVKDSE) the composition is skewed to basic and acidic residues. The disordered stretch occupies residues 61-168 (QKAEELVKDS…DLGPPPPEDS (108 aa)). Ser-77 is modified (phosphoserine). An interaction with Nef region spans residues 95 to 425 (TKVQVHPATS…SPLTRQREYQ (331 aa)). Positions 102–115 (ATSTAATTTATATT) are enriched in low complexity. A compositionally biased stretch (polar residues) spans 143 to 155 (EEQNSPETGSHPT). Residues 209–270 (SKVHKNEQRT…KKLLMNSSCK (62 aa)) adopt a coiled-coil conformation. Ser-297, Ser-416, and Ser-455 each carry phosphoserine. A coiled-coil region spans residues 311-551 (AAEKKVKLLE…KASGERYHME (241 aa)). A required for inhibitory activity of TNF-induced NF-kappa-B activation region spans residues 444–601 (ASPSSPPAAF…MEHPPPHPNS (158 aa)). Residues 465 to 523 (KQELVTQNELLKQQVKIFEEDFQRERSDRERMNEEKEELKKQVEKLQAQVTLTNAQLKT) are ubiquitin-binding domain (UBD). The short motif at 537–543 (QKRKAKA) is the Nuclear localization signal element. Tyr-565 is subject to Phosphotyrosine. Arg-584 carries the post-translational modification Asymmetric dimethylarginine. An Asymmetric dimethylarginine; alternate modification is found at Arg-612. Arg-612 carries the omega-N-methylarginine; alternate modification. Residues 613–647 (PPCAGIRNQSSQVMDPPPDRPAEPESADNDCDGPQ) are disordered. Residues 637-647 (ESADNDCDGPQ) are compositionally biased toward acidic residues. The residue at position 638 (Ser-638) is a Phosphoserine.

As to quaternary structure, interacts with TNFAIP3 and IKBKG (polyubiquitinated); facilitates TNFAIP3-mediated de-ubiquitination of NEMO/IKBKG. Interacts with polyubiquitin. Interacts with MAPK1, SELPLG and PIK3CD. Interacts with IRAK1 (polyubiquitinated). Interacts with MYD88; the interaction is indicative for participation in an activated TLR-signaling complex. Interacts with TAX1BP1. Phosphorylation at Tyr-565 by SRC-family kinases recruits phosphoinositide-3-kinase (PI3K) PIK3CD:p85 heterodimer which results in integrin activation and leukocyte adhesion to activated endothelium during inflammation. In terms of tissue distribution, ubiquitous. Abundant in heart and skeletal muscle and expressed at lower levels in thymus, liver, kidney, brain and intestinal tract.

The protein localises to the cytoplasm. Its subcellular location is the nucleus. In terms of biological role, inhibits NF-kappa-B activation and TNF-induced NF-kappa-B-dependent gene expression by regulating TAX1BP1 and A20/TNFAIP3-mediated deubiquitination of IKBKG; proposed to link A20/TNFAIP3 to ubiquitinated IKBKG. Involved in regulation of EGF-induced ERK1/ERK2 signaling pathway; blocks MAPK3/MAPK1 nuclear translocation and MAPK1-dependent transcription. Increases cell surface CD4(T4) antigen expression. Involved in the anti-inflammatory response of macrophages and positively regulates TLR-induced activation of CEBPB. Involved in the prevention of autoimmunity; this function implicates binding to polyubiquitin. Involved in leukocyte integrin activation during inflammation; this function is mediated by association with SELPLG and dependent on phosphorylation by SRC-family kinases. The polypeptide is TNFAIP3-interacting protein 1 (Tnip1) (Mus musculus (Mouse)).